A 461-amino-acid polypeptide reads, in one-letter code: Regulatory protein AtoC (461 aa).

The region spanning 6–120 is the Response regulatory domain; that stretch reads RILIVDDEDN…ELNLIVQRAL (115 aa). The residue at position 55 (D55) is a 4-aspartylphosphate. A Phosphohistidine modification is found at H73. In terms of domain architecture, Sigma-54 factor interaction spans 145 to 374; it reads ILTNSPAMMD…LSNVIERAVV (230 aa). Residues 173–180 and 236–245 contribute to the ATP site; these read GESGTGKE and ANEGTLLLDE. The segment at residues 433–452 is a DNA-binding region (H-T-H motif); the sequence is RTRTALMLGISRRALMYKLQ.

In terms of processing, phosphorylated by AtoS. Contains two phosphorylation sites, which are both involved in the transduction of the acetoacetate signal. Asp-55 is probably the primary phosphorylation site, but either both residues can be phosphorylated independently by AtoS or the phosphate group can be transferred between them. Post-translationally, the N-terminus is blocked.

The protein resides in the cytoplasm. In terms of biological role, member of the two-component regulatory system AtoS/AtoC. In the presence of acetoacetate, AtoS/AtoC stimulates the expression of the atoDAEB operon, leading to short chain fatty acid catabolism and activation of the poly-(R)-3-hydroxybutyrate (cPHB) biosynthetic pathway. Also induces the operon in response to spermidine. Involved in the regulation of motility and chemotaxis, via transcriptional induction of the flagellar regulon. AtoC acts by binding directly to the promoter region of the target genes. In addition to its role as a transcriptional regulator, functions as a post-translational regulator that inhibits polyamine biosynthesis via regulation of ornithine decarboxylase (ODC). In Escherichia coli (strain K12), this protein is Regulatory protein AtoC (atoC).